A 354-amino-acid polypeptide reads, in one-letter code: Ephrin-4 (354 aa).

The first 22 residues, M1–A22, serve as a signal peptide directing secretion. In terms of domain architecture, Ephrin RBD spans D23–V173. Residue N30 is glycosylated (N-linked (GlcNAc...) asparagine). Intrachain disulfides connect C55–C92 and C80–C162. Residues V173–Q196 form a disordered region. Positions S175–P186 are enriched in low complexity. The GPI-anchor amidated serine moiety is linked to residue S335. The propeptide at S336 to F354 is removed in mature form.

Belongs to the ephrin family. Post-translationally, may undergo proteolysis by metalloprotease sup-17 to give rise to a soluble form.

It is found in the cell membrane. Regulates the formation or stabilization of cell-cell contacts at several stages of epithelial morphogenesis. In early embryonic development, involved in ventral closure of the epidermis. During male tail morphogenesis, regulates precursor cell sorting together with mab-20 and allows the formation of distinct sensory rays. Probably acts as a ligand for lad-2 to regulate axon guidance of several neurons including SDQL, SDQR, SMD and PLN neurons during neurogenesis. The sequence is that of Ephrin-4 (efn-4) from Caenorhabditis briggsae.